The chain runs to 211 residues: Pyridoxine/pyridoxamine 5'-phosphate oxidase (211 aa).

Residues 7 to 10 and Lys-65 each bind substrate; that span reads RREY. FMN-binding positions include 60-65, 75-76, Arg-81, Lys-82, and Gln-104; these read RIVLLK and YT. Substrate contacts are provided by Tyr-122, Arg-126, and Ser-130. FMN contacts are provided by residues 139–140 and Trp-184; that span reads QS. 190–192 serves as a coordination point for substrate; the sequence is RLH. Arg-194 lines the FMN pocket.

Belongs to the pyridoxamine 5'-phosphate oxidase family. In terms of assembly, homodimer. Requires FMN as cofactor.

The catalysed reaction is pyridoxamine 5'-phosphate + O2 + H2O = pyridoxal 5'-phosphate + H2O2 + NH4(+). The enzyme catalyses pyridoxine 5'-phosphate + O2 = pyridoxal 5'-phosphate + H2O2. It functions in the pathway cofactor metabolism; pyridoxal 5'-phosphate salvage; pyridoxal 5'-phosphate from pyridoxamine 5'-phosphate: step 1/1. Its pathway is cofactor metabolism; pyridoxal 5'-phosphate salvage; pyridoxal 5'-phosphate from pyridoxine 5'-phosphate: step 1/1. Catalyzes the oxidation of either pyridoxine 5'-phosphate (PNP) or pyridoxamine 5'-phosphate (PMP) into pyridoxal 5'-phosphate (PLP). This chain is Pyridoxine/pyridoxamine 5'-phosphate oxidase, found in Vibrio parahaemolyticus serotype O3:K6 (strain RIMD 2210633).